We begin with the raw amino-acid sequence, 501 residues long: Cytochrome P450 2S1 (501 aa).

A heme-binding site is contributed by cysteine 441.

The protein belongs to the cytochrome P450 family. The cofactor is heme.

The protein resides in the endoplasmic reticulum membrane. Its subcellular location is the microsome membrane. The catalysed reaction is all-trans-retinoate + reduced [NADPH--hemoprotein reductase] + O2 = all-trans-5,6-epoxyretinoate + oxidized [NADPH--hemoprotein reductase] + H2O + H(+). The enzyme catalyses all-trans-retinoate + reduced [NADPH--hemoprotein reductase] + O2 = all-trans-4-hydroxyretinoate + oxidized [NADPH--hemoprotein reductase] + H2O + H(+). It catalyses the reaction (5S)-hydroperoxy-(6E,8Z,11Z,14Z)-eicosatetraenoate = 5-oxo-(6E,8Z,11Z,14Z)-eicosatetraenoate + H2O. It carries out the reaction (12S)-hydroperoxy-(5Z,8Z,10E,14Z)-eicosatetraenoate = 12-oxo-(5Z,8Z,10E,14Z)-eicosatetraenoate + H2O. The catalysed reaction is (15S)-hydroperoxy-(5Z,8Z,11Z,13E)-eicosatetraenoate = 15-oxo-(5Z,8Z,11Z,13E)-eicosatetraenoate + H2O. The enzyme catalyses prostaglandin H2 = thromboxane A2. It catalyses the reaction prostaglandin H2 = (12S)-hydroxy-(5Z,8E,10E)-heptadecatrienoate + malonaldehyde. It carries out the reaction (13S)-hydroperoxy-(9Z,11E)-octadecadienoate = 13-oxo-(9Z,11E)-octadecadienoate + H2O. The protein operates within lipid metabolism; fatty acid metabolism. A cytochrome P450 monooxygenase involved in the metabolism of retinoids and eicosanoids. In epidermis, may contribute to the oxidative metabolism of all-trans-retinoic acid. For this activity, uses molecular oxygen inserting one oxygen atom into a substrate, and reducing the second into a water molecule, with two electrons provided by NADPH via cytochrome P450 reductase (NADPH--hemoprotein reductase). Additionally, displays peroxidase and isomerase activities toward various oxygenated eicosanoids such as prostaglandin H2 (PGH2) and hydroperoxyeicosatetraenoates (HPETEs). Independently of cytochrome P450 reductase, NADPH, and O2, catalyzes the breakdown of PGH2 to hydroxyheptadecatrienoic acid (HHT) and malondialdehyde (MDA), which is known to act as a mediator of DNA damage. In Mus musculus (Mouse), this protein is Cytochrome P450 2S1 (Cyp2s1).